The sequence spans 126 residues: Small ribosomal subunit protein bS6 (126 aa).

This sequence belongs to the bacterial ribosomal protein bS6 family.

Binds together with bS18 to 16S ribosomal RNA. This is Small ribosomal subunit protein bS6 from Actinobacillus succinogenes (strain ATCC 55618 / DSM 22257 / CCUG 43843 / 130Z).